Reading from the N-terminus, the 138-residue chain is Diuretic hormone 1 (138 aa).

An N-terminal signal peptide occupies residues 1 to 19 (MMWWAIWCVMVVVSSAASA). A propeptide spanning residues 20-78 (APAPDSAPMDLVQIDSAGPDDESLGYAVSSLEGRYGAEAPWLYLLAEMPRDSQIGRAAV) is cleaved from the precursor. I121 bears the Isoleucine amide mark. Positions 125-138 (GLQWSRSEQPSAYY) are excised as a propeptide.

Belongs to the sauvagine/corticotropin-releasing factor/urotensin I family.

It localises to the secreted. Its function is as follows. Regulation of fluid secretion. The protein is Diuretic hormone 1 of Manduca sexta (Tobacco hawkmoth).